We begin with the raw amino-acid sequence, 116 residues long: Ribosome-binding factor A (116 aa).

It belongs to the RbfA family. As to quaternary structure, monomer. Binds 30S ribosomal subunits, but not 50S ribosomal subunits or 70S ribosomes.

The protein resides in the cytoplasm. In terms of biological role, one of several proteins that assist in the late maturation steps of the functional core of the 30S ribosomal subunit. Associates with free 30S ribosomal subunits (but not with 30S subunits that are part of 70S ribosomes or polysomes). Required for efficient processing of 16S rRNA. May interact with the 5'-terminal helix region of 16S rRNA. The chain is Ribosome-binding factor A from Enterococcus faecalis (strain ATCC 700802 / V583).